Here is a 505-residue protein sequence, read N- to C-terminus: Lysine--tRNA ligase (505 aa).

Mg(2+) is bound by residues E415 and E422.

This sequence belongs to the class-II aminoacyl-tRNA synthetase family. As to quaternary structure, homodimer. Mg(2+) serves as cofactor.

It localises to the cytoplasm. The catalysed reaction is tRNA(Lys) + L-lysine + ATP = L-lysyl-tRNA(Lys) + AMP + diphosphate. This is Lysine--tRNA ligase from Pectobacterium atrosepticum (strain SCRI 1043 / ATCC BAA-672) (Erwinia carotovora subsp. atroseptica).